A 119-amino-acid polypeptide reads, in one-letter code: Chorion class CA protein ERA.3 (119 aa).

The N-terminal stretch at 1–21 (MSYFVVFAICIQACLFHNVYS) is a signal peptide. Residues 22–55 (QCLGRVGPGGPPLGPYGGPLGGPGYGPVGYGGCG) form a left arm region. Residues 56-103 (GYGGSGIGNVAVAGELPVVGSSAVMGQVPVIGAVEFAGPACAVGSVSI) form a central domain region. The tract at residues 104–119 (SGACGPTCGCGGLPYY) is right arm.

It belongs to the chorion protein family.

Functionally, this protein is one of many from the eggshell of the silk moth. The sequence is that of Chorion class CA protein ERA.3 (ERA.3) from Bombyx mori (Silk moth).